Here is a 470-residue protein sequence, read N- to C-terminus: Zinc finger protein pat-9 (470 aa).

Residues 1–25 form a disordered region; that stretch reads MENRTPMQHHSGYEIVKSEPPSTPK. C2H2-type zinc fingers lie at residues 84–106, 112–134, and 140–162; these read YPCN…QNSH, FECD…KRIH, and FVCT…KDMH. The disordered stretch occupies residues 191-235; it reads MEQEENGGLPASSSASSVISHPLITTTSGNKKRSKAAKAKQTPSS. Residues 221-230 carry the Nuclear localization signal motif; sequence KKRSKAAKAK.

It belongs to the krueppel C2H2-type zinc-finger protein family. In terms of tissue distribution, expressed in body wall muscle and gonad (at protein level).

Its subcellular location is the nucleus. The protein resides in the chromosome. Functionally, probable transcription factor; required for proper organization of muscle myofilaments and for their recruitment to the M line. The sequence is that of Zinc finger protein pat-9 from Caenorhabditis elegans.